Reading from the N-terminus, the 231-residue chain is Ion-translocating oxidoreductase complex subunit E (231 aa).

The next 6 helical transmembrane spans lie at 18 to 38 (ALVQLLGLCPLLAVTSTATNA), 39 to 59 (LGLGLATTLVLTLTNLTISTL), 63 to 83 (TPAEIRIPIYVMIIASVVSAV), 86 to 106 (LINAYAFGLYQSLGIFIPLIV), 125 to 145 (ALSALDGFSIGMGATCAMFVL), and 182 to 202 (PFLLAMLPPGAFIGLGLMLAG).

It belongs to the NqrDE/RnfAE family. In terms of assembly, the complex is composed of six subunits: RsxA, RsxB, RsxC, RsxD, RsxE and RsxG.

Its subcellular location is the cell inner membrane. Its function is as follows. Part of a membrane-bound complex that couples electron transfer with translocation of ions across the membrane. Required to maintain the reduced state of SoxR. The sequence is that of Ion-translocating oxidoreductase complex subunit E from Escherichia coli O127:H6 (strain E2348/69 / EPEC).